A 702-amino-acid chain; its full sequence is Phosphatase and actin regulator 4 (702 aa).

Disordered regions lie at residues methionine 1 to phenylalanine 37, arginine 72 to glycine 194, and asparagine 222 to alanine 363. Residues glutamate 63 to proline 88 form an RPEL 1 repeat. Over residues arginine 72–leucine 84 the composition is skewed to basic and acidic residues. A compositionally biased stretch (polar residues) spans glycine 106–valine 120. Phosphoserine occurs at positions 116, 118, 131, and 147. Residues serine 147 to alanine 156 are compositionally biased toward polar residues. Residues valine 163–arginine 173 are compositionally biased toward pro residues. Residues threonine 233 to threonine 250 are compositionally biased toward low complexity. Phosphoserine is present on residues serine 270 and serine 291. The span at proline 301–threonine 318 shows a compositional bias: polar residues. A phosphoserine mark is found at serine 342 and serine 344. Over residues serine 342–proline 362 the composition is skewed to pro residues. A Phosphothreonine modification is found at threonine 358. Serine 427 is subject to Phosphoserine. Residue threonine 432 is modified to Phosphothreonine. Phosphoserine occurs at positions 443, 453, and 464. The segment at isoleucine 469–serine 536 is disordered. Residues threonine 484 to serine 497 show a composition bias toward polar residues. A compositionally biased stretch (acidic residues) spans glutamate 508 to serine 518. 4 positions are modified to phosphoserine: serine 514, serine 516, serine 557, and serine 590. RPEL repeat units follow at residues asparagine 583 to asparagine 608 and arginine 621 to glutamate 646. A disordered region spans residues arginine 592 to glutamate 615. A Phosphoserine modification is found at serine 628.

Belongs to the phosphatase and actin regulator family. Binds PPP1CA and actin.

It is found in the cytoplasm. It localises to the cell projection. Its subcellular location is the lamellipodium. Functionally, regulator of protein phosphatase 1 (PP1) required for neural tube and optic fissure closure, and enteric neural crest cell (ENCCs) migration during development. Acts as an activator of PP1 by interacting with PPP1CA and preventing phosphorylation of PPP1CA at 'Thr-320'. During neural tube closure, localizes to the ventral neural tube and activates PP1, leading to down-regulate cell proliferation within cranial neural tissue and the neural retina. Also acts as a regulator of migration of enteric neural crest cells (ENCCs) by activating PP1, leading to dephosphorylation and subsequent activation of cofilin (COF1 or COF2) and repression of the integrin signaling through the RHO/ROCK pathway. In Homo sapiens (Human), this protein is Phosphatase and actin regulator 4 (PHACTR4).